Here is a 624-residue protein sequence, read N- to C-terminus: DNA mismatch repair protein MutL (624 aa).

It belongs to the DNA mismatch repair MutL/HexB family.

In terms of biological role, this protein is involved in the repair of mismatches in DNA. It is required for dam-dependent methyl-directed DNA mismatch repair. May act as a 'molecular matchmaker', a protein that promotes the formation of a stable complex between two or more DNA-binding proteins in an ATP-dependent manner without itself being part of a final effector complex. The sequence is that of DNA mismatch repair protein MutL from Chlorobium phaeobacteroides (strain DSM 266 / SMG 266 / 2430).